A 318-amino-acid chain; its full sequence is Thymidylate synthase (318 aa).

Residues R25 and 180-181 (RR) contribute to the dUMP site. C200 functions as the Nucleophile in the catalytic mechanism. DUMP-binding positions include 220–223 (RSGD), N231, and 261–263 (HIY). D223 contacts (6R)-5,10-methylene-5,6,7,8-tetrahydrofolate. A317 contacts (6R)-5,10-methylene-5,6,7,8-tetrahydrofolate.

This sequence belongs to the thymidylate synthase family. Bacterial-type ThyA subfamily. In terms of assembly, homodimer.

The protein localises to the cytoplasm. It carries out the reaction dUMP + (6R)-5,10-methylene-5,6,7,8-tetrahydrofolate = 7,8-dihydrofolate + dTMP. It functions in the pathway pyrimidine metabolism; dTTP biosynthesis. Its function is as follows. Catalyzes the reductive methylation of 2'-deoxyuridine-5'-monophosphate (dUMP) to 2'-deoxythymidine-5'-monophosphate (dTMP) while utilizing 5,10-methylenetetrahydrofolate (mTHF) as the methyl donor and reductant in the reaction, yielding dihydrofolate (DHF) as a by-product. This enzymatic reaction provides an intracellular de novo source of dTMP, an essential precursor for DNA biosynthesis. This chain is Thymidylate synthase, found in Bacillus cereus (strain ZK / E33L).